The chain runs to 407 residues: Arylacetamide deacetylase-like 4 (407 aa).

Over 1 to 4 the chain is Cytoplasmic; that stretch reads MAVP. The chain crosses the membrane as a helical; Signal-anchor for type II membrane protein span at residues 5-25; the sequence is WLVLLLALPIFFLGVFVWAVF. Residues 26–407 lie on the Lumenal side of the membrane; the sequence is EHFLTTDIPA…NAVVSYIKGI (382 aa). The Involved in the stabilization of the negatively charged intermediate by the formation of the oxyanion hole motif lies at 119–121; that stretch reads HGG. Residue Asn168 is glycosylated (N-linked (GlcNAc...) asparagine). Residue Ser193 is part of the active site. N-linked (GlcNAc...) asparagine glycosylation occurs at Asn269. Residues Asp347 and His377 contribute to the active site.

The protein belongs to the 'GDXG' lipolytic enzyme family.

It localises to the membrane. In Homo sapiens (Human), this protein is Arylacetamide deacetylase-like 4 (AADACL4).